Consider the following 303-residue polypeptide: Bifunctional protein FolD (303 aa).

NADP(+)-binding positions include 168–170 (GRS), threonine 197, and valine 238.

This sequence belongs to the tetrahydrofolate dehydrogenase/cyclohydrolase family. In terms of assembly, homodimer.

The enzyme catalyses (6R)-5,10-methylene-5,6,7,8-tetrahydrofolate + NADP(+) = (6R)-5,10-methenyltetrahydrofolate + NADPH. The catalysed reaction is (6R)-5,10-methenyltetrahydrofolate + H2O = (6R)-10-formyltetrahydrofolate + H(+). It participates in one-carbon metabolism; tetrahydrofolate interconversion. Functionally, catalyzes the oxidation of 5,10-methylenetetrahydrofolate to 5,10-methenyltetrahydrofolate and then the hydrolysis of 5,10-methenyltetrahydrofolate to 10-formyltetrahydrofolate. The polypeptide is Bifunctional protein FolD (Desulfosudis oleivorans (strain DSM 6200 / JCM 39069 / Hxd3) (Desulfococcus oleovorans)).